A 278-amino-acid chain; its full sequence is Large ribosomal subunit protein uL2 (278 aa).

Positions 210-219 (RKRWLGKRPQ) are enriched in basic residues. The tract at residues 210-278 (RKRWLGKRPQ…LIIRHRKGSK (69 aa)) is disordered. A compositionally biased stretch (basic and acidic residues) spans 258-270 (KTRDVKKASEKLI).

The protein belongs to the universal ribosomal protein uL2 family. As to quaternary structure, part of the 50S ribosomal subunit. Forms a bridge to the 30S subunit in the 70S ribosome.

One of the primary rRNA binding proteins. Required for association of the 30S and 50S subunits to form the 70S ribosome, for tRNA binding and peptide bond formation. It has been suggested to have peptidyltransferase activity; this is somewhat controversial. Makes several contacts with the 16S rRNA in the 70S ribosome. This chain is Large ribosomal subunit protein uL2, found in Lactobacillus acidophilus (strain ATCC 700396 / NCK56 / N2 / NCFM).